A 204-amino-acid chain; its full sequence is UPF0637 protein lmo1065 (204 aa).

The protein belongs to the UPF0637 family.

The polypeptide is UPF0637 protein lmo1065 (Listeria monocytogenes serovar 1/2a (strain ATCC BAA-679 / EGD-e)).